A 247-amino-acid chain; its full sequence is Carboxy-S-adenosyl-L-methionine synthase (247 aa).

S-adenosyl-L-methionine contacts are provided by residues Y39, 64–66, 89–90, 117–118, N132, and R199; these read GCS, DN, and DI.

Belongs to the class I-like SAM-binding methyltransferase superfamily. Cx-SAM synthase family. Homodimer.

It carries out the reaction prephenate + S-adenosyl-L-methionine = carboxy-S-adenosyl-L-methionine + 3-phenylpyruvate + H2O. In terms of biological role, catalyzes the conversion of S-adenosyl-L-methionine (SAM) to carboxy-S-adenosyl-L-methionine (Cx-SAM). The sequence is that of Carboxy-S-adenosyl-L-methionine synthase from Citrobacter koseri (strain ATCC BAA-895 / CDC 4225-83 / SGSC4696).